The sequence spans 364 residues: Peroxidase (364 aa).

The signal sequence occupies residues 1–20 (MKLSLFSTFAAVIIGALALP). At Gln-21 the chain carries Pyrrolidone carboxylic acid. Disulfide bonds link Cys-32–Cys-44, Cys-43–Cys-313, Cys-63–Cys-149, and Cys-277–Cys-342. His-76 functions as the Proton acceptor in the catalytic mechanism. Ca(2+) is bound by residues Asp-77, Gly-95, Asp-97, and Ser-99. Asn-163 carries N-linked (GlcNAc...) (high mannose) asparagine glycosylation. Heme b is bound at residue His-204. Ser-205, Asp-222, Thr-224, Val-227, and Asp-229 together coordinate Ca(2+).

The protein belongs to the peroxidase family. Ligninase subfamily. It depends on Ca(2+) as a cofactor. The cofactor is heme b.

Its subcellular location is the secreted. The enzyme catalyses 2 a phenolic donor + H2O2 = 2 a phenolic radical donor + 2 H2O. This chain is Peroxidase, found in Arthromyces ramosus.